Reading from the N-terminus, the 629-residue chain is tRNA uridine 5-carboxymethylaminomethyl modification enzyme MnmG (629 aa).

FAD contacts are provided by residues G13–G18, V125, and S180. Residue G273 to F287 participates in NAD(+) binding. Residue Q370 coordinates FAD.

The protein belongs to the MnmG family. As to quaternary structure, homodimer. Heterotetramer of two MnmE and two MnmG subunits. FAD serves as cofactor.

It localises to the cytoplasm. NAD-binding protein involved in the addition of a carboxymethylaminomethyl (cmnm) group at the wobble position (U34) of certain tRNAs, forming tRNA-cmnm(5)s(2)U34. In Salmonella paratyphi A (strain ATCC 9150 / SARB42), this protein is tRNA uridine 5-carboxymethylaminomethyl modification enzyme MnmG.